The sequence spans 469 residues: UDP-N-acetylmuramate--L-alanine ligase (469 aa).

119–125 contacts ATP; it reads GTHGKTT.

Belongs to the MurCDEF family.

The protein localises to the cytoplasm. The enzyme catalyses UDP-N-acetyl-alpha-D-muramate + L-alanine + ATP = UDP-N-acetyl-alpha-D-muramoyl-L-alanine + ADP + phosphate + H(+). The protein operates within cell wall biogenesis; peptidoglycan biosynthesis. In terms of biological role, cell wall formation. The chain is UDP-N-acetylmuramate--L-alanine ligase from Vesicomyosocius okutanii subsp. Calyptogena okutanii (strain HA).